The chain runs to 290 residues: Arylamine N-acetyltransferase, pineal gland isozyme NAT-10 (290 aa).

Residue Cys-68 is the Acyl-thioester intermediate of the active site. Catalysis depends on residues His-107 and Asp-122.

It belongs to the arylamine N-acetyltransferase family.

The enzyme catalyses an arylamine + acetyl-CoA = an N-acetylarylamine + CoA. The polypeptide is Arylamine N-acetyltransferase, pineal gland isozyme NAT-10 (Gallus gallus (Chicken)).